A 59-amino-acid polypeptide reads, in one-letter code: Conotoxin Sr5.4 (59 aa).

The signal sequence occupies residues 1-22 (MRCLPVFVILLLLIASAPSVDA). A propeptide spanning residues 23 to 44 (QLKTKDDVPLASFHDNAKGTQH) is cleaved from the precursor.

The protein belongs to the conotoxin T superfamily. Contains 2 disulfide bonds that can be either 'C1-C3, C2-C4' or 'C1-C4, C2-C3', since these disulfide connectivities have been observed for conotoxins with cysteine framework V (for examples, see AC P0DQQ7 and AC P81755). As to expression, expressed by the venom duct.

It localises to the secreted. The protein is Conotoxin Sr5.4 of Conus spurius (Alphabet cone).